Consider the following 503-residue polypeptide: Maturase K (503 aa).

It belongs to the intron maturase 2 family. MatK subfamily.

It is found in the plastid. Its subcellular location is the chloroplast. Its function is as follows. Usually encoded in the trnK tRNA gene intron. Probably assists in splicing its own and other chloroplast group II introns. The polypeptide is Maturase K (Purshia tridentata (Antelope bitterbrush)).